Consider the following 574-residue polypeptide: Desiccation/radiation resistance protein DR_1769 (574 aa).

Residues methionine 1–alanine 33 form the signal peptide. Low complexity predominate over residues threonine 400–proline 438. The segment at threonine 400–alanine 461 is disordered. Residues arginine 439 to serine 459 are compositionally biased toward pro residues.

Functionally, plays an important role in resistance to desiccation and radiation, maybe by protecting genome integrity under extreme conditions. This chain is Desiccation/radiation resistance protein DR_1769, found in Deinococcus radiodurans (strain ATCC 13939 / DSM 20539 / JCM 16871 / CCUG 27074 / LMG 4051 / NBRC 15346 / NCIMB 9279 / VKM B-1422 / R1).